Reading from the N-terminus, the 123-residue chain is Histone H2B.1/H2B.2 (123 aa).

Positions 1-30 (MPPKVSGKAAKKAGKAQKNITKGDKKKNRK) are disordered. O-linked (GlcNAc) serine glycosylation occurs at Ser-110. A Glycyl lysine isopeptide (Lys-Gly) (interchain with G-Cter in ubiquitin) cross-link involves residue Lys-118.

It belongs to the histone H2B family. The nucleosome is a histone octamer containing two molecules each of H2A, H2B, H3 and H4 assembled in one H3-H4 heterotetramer and two H2A-H2B heterodimers. The octamer wraps approximately 147 bp of DNA. In terms of processing, monoubiquitination of Lys-118 gives a specific tag for epigenetic transcriptional activation and is also prerequisite for histone H3 'Lys-4' and 'Lys-79' methylation. GlcNAcylation at Ser-110 promotes monoubiquitination of Lys-118. It fluctuates in response to extracellular glucose, and associates with transcribed genes.

Its subcellular location is the nucleus. It is found in the chromosome. Functionally, core component of nucleosome. Nucleosomes wrap and compact DNA into chromatin, limiting DNA accessibility to the cellular machineries which require DNA as a template. Histones thereby play a central role in transcription regulation, DNA repair, DNA replication and chromosomal stability. DNA accessibility is regulated via a complex set of post-translational modifications of histones, also called histone code, and nucleosome remodeling. The chain is Histone H2B.1/H2B.2 from Tigriopus californicus (Marine copepod).